The primary structure comprises 499 residues: FAD-dependent oxidoreductase domain-containing protein 1 (499 aa).

A helical membrane pass occupies residues 75-95; that stretch reads ERADVVIVGGGVMGWSIAYWL.

Requires FAD as cofactor.

The protein localises to the mitochondrion inner membrane. Required for the assembly of the mitochondrial membrane respiratory chain NADH dehydrogenase (Complex I). Involved in mid-late stages of complex I assembly. The chain is FAD-dependent oxidoreductase domain-containing protein 1 (foxred1) from Xenopus laevis (African clawed frog).